Reading from the N-terminus, the 71-residue chain is ATP synthase F(0) complex subunit e, mitochondrial (71 aa).

Position 34 is an N6-acetyllysine (K34). At S68 the chain carries Phosphoserine.

It belongs to the ATPase e subunit family. Component of the ATP synthase complex composed at least of ATP5F1A/subunit alpha, ATP5F1B/subunit beta, ATP5MC1/subunit c (homooctomer), MT-ATP6/subunit a, MT-ATP8/subunit 8, ATP5ME/subunit e, ATP5MF/subunit f, ATP5MG/subunit g, ATP5MK/subunit k, ATP5MJ/subunit j, ATP5F1C/subunit gamma, ATP5F1D/subunit delta, ATP5F1E/subunit epsilon, ATP5PF/subunit F6, ATP5PB/subunit b, ATP5PD/subunit d, ATP5PO/subunit OSCP. ATP synthase complex consists of a soluble F(1) head domain (subunits alpha(3) and beta(3)) - the catalytic core - and a membrane F(0) domain - the membrane proton channel (subunits c, a, 8, e, f, g, k and j). These two domains are linked by a central stalk (subunits gamma, delta, and epsilon) rotating inside the F1 region and a stationary peripheral stalk (subunits F6, b, d, and OSCP). In terms of tissue distribution, mammary gland, liver, kidney, heart, spleen, brain and lung.

The protein localises to the mitochondrion. The protein resides in the mitochondrion inner membrane. Functionally, subunit e, of the mitochondrial membrane ATP synthase complex (F(1)F(0) ATP synthase or Complex V) that produces ATP from ADP in the presence of a proton gradient across the membrane which is generated by electron transport complexes of the respiratory chain. ATP synthase complex consist of a soluble F(1) head domain - the catalytic core - and a membrane F(1) domain - the membrane proton channel. These two domains are linked by a central stalk rotating inside the F(1) region and a stationary peripheral stalk. During catalysis, ATP synthesis in the catalytic domain of F(1) is coupled via a rotary mechanism of the central stalk subunits to proton translocation. In vivo, can only synthesize ATP although its ATP hydrolase activity can be activated artificially in vitro. Part of the complex F(0) domain. The protein is ATP synthase F(0) complex subunit e, mitochondrial of Mus musculus (Mouse).